The following is a 392-amino-acid chain: Galactokinase (392 aa).

Positions 37, 43, 44, and 46 each coordinate alpha-D-galactose. Residues glycine 136, glycine 138, serine 140, and serine 141 each contribute to the ATP site. Aspartate 186 contacts alpha-D-galactose. The Proton acceptor role is filled by aspartate 186. Position 230 is a phosphoserine (serine 230). Tyrosine 236 contributes to the alpha-D-galactose binding site.

Belongs to the GHMP kinase family. GalK subfamily. Homodimer.

The enzyme catalyses alpha-D-galactose + ATP = alpha-D-galactose 1-phosphate + ADP + H(+). The protein operates within carbohydrate metabolism; galactose metabolism. Functionally, catalyzes the transfer of a phosphate from ATP to alpha-D-galactose and participates in the first committed step in the catabolism of galactose. In Mus musculus (Mouse), this protein is Galactokinase (Galk1).